We begin with the raw amino-acid sequence, 323 residues long: Viral cathepsin (323 aa).

Residues 1–18 form the signal peptide; that stretch reads MSKFLLYWFVYGVVCSAA. A propeptide spans 19 to 112 (activation peptide); it reads YDILKAPNYF…VVLDRPPGKG (94 aa). 3 disulfide bridges follow: Cys133–Cys174, Cys167–Cys207, and Cys262–Cys310. Residue Cys136 is part of the active site. The N-linked (GlcNAc...) asparagine; by host glycan is linked to Asn158. Catalysis depends on residues His269 and Asn289.

This sequence belongs to the peptidase C1 family. Synthesized as an inactive proenzyme and activated by proteolytic removal of the inhibitory propeptide.

It carries out the reaction Endopeptidase of broad specificity, hydrolyzing substrates of both cathepsin L and cathepsin B.. Cysteine protease that plays an essential role in host liquefaction to facilitate horizontal transmission of the virus. May participate in the degradation of foreign protein expressed by the baculovirus system. This is Viral cathepsin (VCATH) from Lepidoptera (butterflies and moths).